Reading from the N-terminus, the 77-residue chain is U10-lycotoxin-Ls1a (77 aa).

The N-terminal stretch at 1–20 is a signal peptide; the sequence is MKLIIFTGLVLFAIVSLIEA. A propeptide spanning residues 21-26 is cleaved from the precursor; it reads EEESGR.

This sequence belongs to the neurotoxin 19 (CSTX) family. 09 (U10-Lctx) subfamily. Contains 4 disulfide bonds. As to expression, expressed by the venom gland.

The protein localises to the secreted. The chain is U10-lycotoxin-Ls1a from Lycosa singoriensis (Wolf spider).